Reading from the N-terminus, the 290-residue chain is tRNA-cytidine(32) 2-sulfurtransferase (290 aa).

The PP-loop motif signature appears at 66–71 (SGGKDS). The [4Fe-4S] cluster site is built by cysteine 141, cysteine 144, and cysteine 232.

The protein belongs to the TtcA family. Homodimer. It depends on Mg(2+) as a cofactor. The cofactor is [4Fe-4S] cluster.

The protein localises to the cytoplasm. The catalysed reaction is cytidine(32) in tRNA + S-sulfanyl-L-cysteinyl-[cysteine desulfurase] + AH2 + ATP = 2-thiocytidine(32) in tRNA + L-cysteinyl-[cysteine desulfurase] + A + AMP + diphosphate + H(+). The protein operates within tRNA modification. Its function is as follows. Catalyzes the ATP-dependent 2-thiolation of cytidine in position 32 of tRNA, to form 2-thiocytidine (s(2)C32). The sulfur atoms are provided by the cysteine/cysteine desulfurase (IscS) system. This chain is tRNA-cytidine(32) 2-sulfurtransferase, found in Rhizobium etli (strain ATCC 51251 / DSM 11541 / JCM 21823 / NBRC 15573 / CFN 42).